Consider the following 403-residue polypeptide: Phosphoglycerate kinase (403 aa).

Substrate-binding positions include 22–24 (DLN), Arg37, 60–63 (HLGR), Arg119, and Arg156. ATP contacts are provided by residues Lys206, Gly302, Glu333, and 359–362 (GGDS).

It belongs to the phosphoglycerate kinase family. In terms of assembly, monomer.

The protein localises to the cytoplasm. It carries out the reaction (2R)-3-phosphoglycerate + ATP = (2R)-3-phospho-glyceroyl phosphate + ADP. Its pathway is carbohydrate degradation; glycolysis; pyruvate from D-glyceraldehyde 3-phosphate: step 2/5. The chain is Phosphoglycerate kinase from Streptomyces avermitilis (strain ATCC 31267 / DSM 46492 / JCM 5070 / NBRC 14893 / NCIMB 12804 / NRRL 8165 / MA-4680).